Consider the following 411-residue polypeptide: Protrudin (411 aa).

The interval 1 to 27 (MQTSEREGSGPELSPSVMPEAPLESPP) is disordered. The Cytoplasmic segment spans residues 1–66 (MQTSEREGSG…AGDGVRYLLR (66 aa)). The sufficient for homooligomerization stretch occupies residues 1–92 (MQTSEREGSG…LFLTLNEGAW (92 aa)). Residues 1 to 205 (MQTSEREGSG…LYLLPLCWVL (205 aa)) are sufficient for localization to endoplasmic reticulum tubular network and for interactions with REEP1, REEP5, ATL1, ATL2, ATL3 and SPAST. Positions 51–64 (LEPLKDAGDGVRYL) are necessary for interaction with RAB11A and function in neurite outgrowth. A helical transmembrane segment spans residues 67–87 (WQMPLCSLLTCLGLNVLFLTL). Asn88 is a topological domain (lumenal). Residues 89 to 109 (EGAWYSVGALMISVPALLGYL) traverse the membrane as a helical segment. Topologically, residues 110-187 (QEVCRARLPD…NPVVSSQFYG (78 aa)) are cytoplasmic. Positions 188 to 208 (ALLGTVCMLYLLPLCWVLTLL) form an intramembrane region, helical. Over 209–411 (NSTLFLGNVE…CASCNQTLSK (203 aa)) the chain is Cytoplasmic. The interval 234–286 (MNPKQEEHAFESPPPPDVGGKDGLMDSTPALTPTEDLTPGSVEEAEEAEPDEE) is disordered. The segment at 271–361 (TPGSVEEAEE…GCSATFSVLK (91 aa)) is necessary for interaction with KIF5A. Positions 276 to 286 (EEAEEAEPDEE) are enriched in acidic residues. The interval 286–292 (EFKDAIE) is necessary for interaction with VAPA and function in cell projections formation. Residues 344-410 (TNNFGNCTGC…VCASCNQTLS (67 aa)) form an FYVE-type zinc finger. Residues Cys350, Cys353, Cys366, Cys369, Cys374, Cys377, Cys402, and Cys405 each contribute to the Zn(2+) site.

In terms of assembly, can form homooligomers (monomers, dimers and tetramers). Interacts with RAB11A (GDP-bound form); regulates RAB11A. Interacts with FKBP8; may negatively regulate ZFYVE27 phosphorylation. Interacts with VAPA (via MSP domain); may regulate ZFYVE27 retention in the endoplasmic reticulum and its function in cell projections formation. Interacts with VAPB (via MSP domain). Interacts with REEP1, REEP5 and ATL1. Interacts with ATL2, ATL3 and SPAST. Interacts with KIF5A and RTN3. Interacts with RAB11B (GDP-bound form), SURF4, KIF5B and KIF5C. In terms of processing, phosphorylated. Phosphorylation is induced by NGF through the MAPK/ERK pathway and modulates interaction with RAB11A.

The protein resides in the recycling endosome membrane. It localises to the endoplasmic reticulum membrane. Its subcellular location is the cell projection. The protein localises to the growth cone membrane. Its function is as follows. Key regulator of RAB11-dependent vesicular trafficking during neurite extension through polarized membrane transport. Promotes axonal elongation and contributes to the establishment of neuronal cell polarity. Involved in nerve growth factor-induced neurite formation in VAPA-dependent manner. Contributes to both the formation and stabilization of the tubular ER network. Involved in ER morphogenesis by regulating the sheet-to-tubule balance and possibly the density of tubule interconnections. Acts as an adapter protein and facilitates the interaction of KIF5A with VAPA, VAPB, SURF4, RAB11A, RAB11B and RTN3 and the ZFYVE27-KIF5A complex contributes to the transport of these proteins in neurons. Can induce formation of neurite-like membrane protrusions in non-neuronal cells in a KIF5A/B-dependent manner. The sequence is that of Protrudin (ZFYVE27) from Homo sapiens (Human).